The chain runs to 150 residues: Cytochrome b5 type B (150 aa).

Residues 1–15 (MSGSMATAEASGSDG) constitute a propeptide that is removed on maturation. The segment at 1-21 (MSGSMATAEASGSDGKGQEVE) is disordered. S23 carries the post-translational modification Phosphoserine. Positions 24–100 (VTYYRMEEVA…LKQYYIGDIH (77 aa)) constitute a Cytochrome b5 heme-binding domain. K34 bears the N6-acetyllysine mark. At S37 the chain carries Phosphoserine. The residue at position 39 (K39) is an N6-methyllysine. H59 and H83 together coordinate heme. S84 carries the phosphoserine modification. Residues 122-144 (CWAYWILPIIGAVLLGFLYRYYT) traverse the membrane as a helical segment.

It belongs to the cytochrome b5 family. As to quaternary structure, component of a complex composed of cytochrome b5, NADH-cytochrome b5 reductase (CYB5R3) and MTARC2.

It localises to the mitochondrion outer membrane. In terms of biological role, cytochrome b5 is a membrane-bound hemoprotein functioning as an electron carrier for several membrane-bound oxygenases. This is Cytochrome b5 type B (CYB5B) from Pongo abelii (Sumatran orangutan).